We begin with the raw amino-acid sequence, 48 residues long: Thiamine thiazole synthase, chloroplastic (48 aa).

Substrate contacts are provided by Ala18 and Val40.

It belongs to the THI4 family. In terms of assembly, homooctamer. Fe cation serves as cofactor.

It localises to the plastid. Its subcellular location is the chloroplast. The enzyme catalyses [ADP-thiazole synthase]-L-cysteine + glycine + NAD(+) = [ADP-thiazole synthase]-dehydroalanine + ADP-5-ethyl-4-methylthiazole-2-carboxylate + nicotinamide + 3 H2O + 2 H(+). Functionally, involved in biosynthesis of the thiamine precursor thiazole. Catalyzes the conversion of NAD and glycine to adenosine diphosphate 5-(2-hydroxyethyl)-4-methylthiazole-2-carboxylic acid (ADT), an adenylated thiazole intermediate. The reaction includes an iron-dependent sulfide transfer from a conserved cysteine residue of the protein to a thiazole intermediate. The enzyme can only undergo a single turnover, which suggests it is a suicide enzyme. May have additional roles in adaptation to various stress conditions and in DNA damage tolerance. This chain is Thiamine thiazole synthase, chloroplastic (THI1), found in Populus euphratica (Euphrates poplar).